Reading from the N-terminus, the 212-residue chain is ATP-dependent Clp protease proteolytic subunit (212 aa).

Residue S106 is the Nucleophile of the active site. The active site involves H131.

This sequence belongs to the peptidase S14 family. Fourteen ClpP subunits assemble into 2 heptameric rings which stack back to back to give a disk-like structure with a central cavity, resembling the structure of eukaryotic proteasomes.

The protein resides in the cytoplasm. It carries out the reaction Hydrolysis of proteins to small peptides in the presence of ATP and magnesium. alpha-casein is the usual test substrate. In the absence of ATP, only oligopeptides shorter than five residues are hydrolyzed (such as succinyl-Leu-Tyr-|-NHMec, and Leu-Tyr-Leu-|-Tyr-Trp, in which cleavage of the -Tyr-|-Leu- and -Tyr-|-Trp bonds also occurs).. Cleaves peptides in various proteins in a process that requires ATP hydrolysis. Has a chymotrypsin-like activity. Plays a major role in the degradation of misfolded proteins. This chain is ATP-dependent Clp protease proteolytic subunit, found in Rhodopseudomonas palustris (strain HaA2).